The sequence spans 612 residues: PAN2-PAN3 deadenylation complex subunit PAN3 (612 aa).

The segment at 10–39 adopts a C3H1-type zinc-finger fold; that stretch reads WAKDTPCKNITIYGYCKYENDGCIFNHGKP. The span at 44–62 shows a compositional bias: low complexity; the sequence is SNTGGAAAGSAEDSAASGG. Positions 44 to 64 are disordered; that stretch reads SNTGGAAAGSAEDSAASGGVT. 2 short sequence motifs (PABPC-interacting motif-2 (PAM-2)) span residues 84 to 104 and 111 to 131; these read SVAIPDFNNIPSFTPERIVSS and TAFTPSFNPYGSDSFNPSANV. The tract at residues 231–481 is pseudokinase domain; it reads QVFPSDGNLP…TIAEFTALFS (251 aa). ATP-binding positions include Arg-286, 336–343, and 389–390; these read DYYPQSNS and DK. A coiled-coil region spans residues 482 to 520; that stretch reads HKMLDIISSSQTYSEYIEQHLSRELENGRLFRLMCKLNF. Residues 521–612 form a knob domain region; the sequence is IFGRMESSMD…IDSTFRSMTQ (92 aa).

This sequence belongs to the protein kinase superfamily. PAN3 family. As to quaternary structure, homodimer. Forms a heterotrimer with a catalytic subunit PAN2 to form the poly(A)-nuclease (PAN) deadenylation complex. Interacts (via PAM-2 motif) with poly(A)-binding protein PAB1 (via PABC domain), conferring substrate specificity of the enzyme complex.

It is found in the cytoplasm. Regulatory subunit of the poly(A)-nuclease (PAN) deadenylation complex, one of two cytoplasmic mRNA deadenylases involved in mRNA turnover. PAN specifically shortens poly(A) tails of RNA and the activity is stimulated by poly(A)-binding protein PAB1. PAN deadenylation is followed by rapid degradation of the shortened mRNA tails by the CCR4-NOT complex. Deadenylated mRNAs are then degraded by two alternative mechanisms, namely exosome-mediated 3'-5' exonucleolytic degradation, or deadenylation-dependent mRNA decaping and subsequent 5'-3' exonucleolytic degradation by XRN1. May also be involved in post-transcriptional maturation of mRNA poly(A) tails. PAN3 acts as a positive regulator for PAN activity, recruiting the catalytic subunit PAN2 to mRNA via its interaction with RNA and with PAB1. This chain is PAN2-PAN3 deadenylation complex subunit PAN3, found in Eremothecium gossypii (strain ATCC 10895 / CBS 109.51 / FGSC 9923 / NRRL Y-1056) (Yeast).